The primary structure comprises 589 residues: Multidrug transporter FLR2 (589 aa).

The disordered stretch occupies residues 50-116 (KEEMKQDNQT…SSTKDASKPE (67 aa)). Residues 56-73 (DNQTSTDSMSTSTQQETD) are compositionally biased toward low complexity. N-linked (GlcNAc...) asparagine glycosylation is present at N57. Residues 107-116 (SSTKDASKPE) are compositionally biased toward basic and acidic residues. The N-linked (GlcNAc...) asparagine glycan is linked to N136. The next 12 membrane-spanning stretches (helical) occupy residues 143-163 (TFVI…SSIY), 179-199 (VVGT…PIIF), 211-231 (MPLY…CALV), 234-254 (IAGL…VLAT), 275-295 (WAVG…AMVV), 301-321 (WIFW…IFFF), 378-398 (PIIL…YLFF), 417-437 (GLAF…LIIF), 455-475 (LFLI…FFFG), 480-500 (IHWI…FNLF), 516-536 (ASVF…FPLF), and 551-571 (VAWG…IPFV).

This sequence belongs to the major facilitator superfamily.

It is found in the cell membrane. Multidrug transporter that confers resistance to 5-flucytosine (5-FC) and clotrimazole. Further confers azole drug resistance. Plays direct roles in extrusion of 5-flucytosine and clotrimazole. This Candida glabrata (strain ATCC 2001 / BCRC 20586 / JCM 3761 / NBRC 0622 / NRRL Y-65 / CBS 138) (Yeast) protein is Multidrug transporter FLR2.